We begin with the raw amino-acid sequence, 432 residues long: Adenylosuccinate synthetase (432 aa).

Residues 12–18 (GDEGKGK) and 40–42 (GHT) contribute to the GTP site. Residue Asp13 is the Proton acceptor of the active site. Mg(2+) contacts are provided by Asp13 and Gly40. IMP-binding positions include 13–16 (DEGK), 38–41 (NAGH), Thr132, Arg146, Gln226, Thr241, and Arg305. His41 acts as the Proton donor in catalysis. A substrate-binding site is contributed by 301 to 307 (VVTGRKR). Residues Arg307, 333–335 (KLD), and 415–417 (STS) each bind GTP.

It belongs to the adenylosuccinate synthetase family. As to quaternary structure, homodimer. Requires Mg(2+) as cofactor.

The protein resides in the cytoplasm. It carries out the reaction IMP + L-aspartate + GTP = N(6)-(1,2-dicarboxyethyl)-AMP + GDP + phosphate + 2 H(+). The protein operates within purine metabolism; AMP biosynthesis via de novo pathway; AMP from IMP: step 1/2. Plays an important role in the de novo pathway of purine nucleotide biosynthesis. Catalyzes the first committed step in the biosynthesis of AMP from IMP. The chain is Adenylosuccinate synthetase from Rhizobium leguminosarum bv. trifolii (strain WSM2304).